The primary structure comprises 291 residues: Undecaprenyl-diphosphatase 2 (291 aa).

The next 6 membrane-spanning stretches (helical) occupy residues 39–59 (PGAA…LIYF), 85–105 (AQMG…GVTL), 118–138 (ITAT…RLAA), 203–223 (FLLA…DAAA), 231–251 (PTVF…AWFM), and 262–282 (FVWY…TGAL).

The protein belongs to the UppP family.

Its subcellular location is the cell membrane. The catalysed reaction is di-trans,octa-cis-undecaprenyl diphosphate + H2O = di-trans,octa-cis-undecaprenyl phosphate + phosphate + H(+). Its function is as follows. Catalyzes the dephosphorylation of undecaprenyl diphosphate (UPP). Confers resistance to bacitracin. In Streptomyces avermitilis (strain ATCC 31267 / DSM 46492 / JCM 5070 / NBRC 14893 / NCIMB 12804 / NRRL 8165 / MA-4680), this protein is Undecaprenyl-diphosphatase 2.